The following is a 413-amino-acid chain: Arogenate dehydratase/prephenate dehydratase 6, chloroplastic (413 aa).

A chloroplast-targeting transit peptide spans 1-44 (MKALSSSSPILGASQPATATALIARSGRSEWQSSCAILTSKVIS). The 178-residue stretch at 117 to 294 (RVAYQGVPGA…NVTRFVMLAR (178 aa)) folds into the Prephenate dehydratase domain. In terms of domain architecture, ACT spans 308–399 (SIVFAHEKGT…SFLRVLGSYP (92 aa)).

Expressed in roots, leaves, stems, flowers and siliques.

The protein localises to the plastid. The protein resides in the chloroplast stroma. It catalyses the reaction L-arogenate + H(+) = L-phenylalanine + CO2 + H2O. It carries out the reaction prephenate + H(+) = 3-phenylpyruvate + CO2 + H2O. Its pathway is amino-acid biosynthesis; L-phenylalanine biosynthesis; L-phenylalanine from L-arogenate: step 1/1. It functions in the pathway amino-acid biosynthesis; L-phenylalanine biosynthesis; phenylpyruvate from prephenate: step 1/1. Functionally, converts the prephenate produced from the shikimate-chorismate pathway into phenylalanine. Dehydratase that uses arogenate and prephenate as substrates. Utilzes more efficiently arogenate than prephenate. In Arabidopsis thaliana (Mouse-ear cress), this protein is Arogenate dehydratase/prephenate dehydratase 6, chloroplastic.